The sequence spans 675 residues: Mitochondrial distribution and morphology protein 12 (675 aa).

Residues 1-675 form the SMP-LTD domain; that stretch reads MSIDLNWDTV…VYPSFWTFLV (675 aa). Disordered regions lie at residues 66 to 186, 241 to 270, 307 to 327, 365 to 390, and 444 to 517; these read LPDF…GTNH, GPSWIADQQQQQQQQNNMLPGGAGGGGAGG, GTGKPTPGPSPLTGTSTPLGT, TGPRHKRNPSSQSLNSVGDYSPVAPA, and PKQG…RFRE. Residues 78-101 are compositionally biased toward acidic residues; sequence SSEESDSEEEVAYENEGEYLDDPV. Residues 123–137 show a composition bias toward low complexity; sequence NSSTGSRNGSGPNSG. Over residues 261 to 270 the composition is skewed to gly residues; sequence GGAGGGGAGG. The segment covering 317-327 has biased composition (low complexity); sequence PLTGTSTPLGT. Composition is skewed to polar residues over residues 373–382 and 454–469; these read PSSQSLNSVG and VSTLAPNSAGTSNNRA. A compositionally biased stretch (acidic residues) spans 497 to 510; that stretch reads EPEEDEEEEEEGEE.

The protein belongs to the MDM12 family. Component of the ER-mitochondria encounter structure (ERMES) or MDM complex, composed of mmm-1, mdm10, mdm12 and mdm34. A mmm-1 homodimer associates with one molecule of mdm12 on each side in a pairwise head-to-tail manner, and the SMP-LTD domains of mmm-1 and mdm12 generate a continuous hydrophobic tunnel for phospholipid trafficking.

The protein resides in the mitochondrion outer membrane. Its subcellular location is the endoplasmic reticulum membrane. Its function is as follows. Component of the ERMES/MDM complex, which serves as a molecular tether to connect the endoplasmic reticulum (ER) and mitochondria. Components of this complex are involved in the control of mitochondrial shape and protein biogenesis, and function in nonvesicular lipid trafficking between the ER and mitochondria. Mdm12 is required for the interaction of the ER-resident membrane protein MMM1 and the outer mitochondrial membrane-resident beta-barrel protein mdm10. The mdm12-mmm-1 subcomplex functions in the major beta-barrel assembly pathway that is responsible for biogenesis of all mitochondrial outer membrane beta-barrel proteins, and acts in a late step after the SAM complex. The mdm10-mdm12-mmm-1 subcomplex further acts in the TOM40-specific pathway after the action of the mdm12-mmm1 complex. Essential for establishing and maintaining the structure of mitochondria and maintenance of mtDNA nucleoids. The protein is Mitochondrial distribution and morphology protein 12 of Neurospora crassa (strain ATCC 24698 / 74-OR23-1A / CBS 708.71 / DSM 1257 / FGSC 987).